The primary structure comprises 187 residues: Putative manganese efflux pump MntP (187 aa).

The next 6 membrane-spanning stretches (helical) occupy residues 3-23 (FYSL…VSLC), 35-55 (HYLI…TIGY), 56-76 (FIGI…AFIL), 107-127 (LALA…FAFL), 129-149 (VNLL…CIIA), and 166-186 (LLGG…HLFF).

The protein belongs to the MntP (TC 9.B.29) family.

The protein resides in the cell inner membrane. Probably functions as a manganese efflux pump. The polypeptide is Putative manganese efflux pump MntP (Campylobacter jejuni (strain RM1221)).